The sequence spans 155 residues: MSEQNNTEMTFQIQRIYTKDISFEAPNAPHVFQKDWQPEVKLDLDTASSQLADDVYEVVLRVTVTASLGEETAFLCEVQQGGIFSIAGIEGTQMAHCLGAYCPNILFPYARECITSVVSRGTFPQLNLAPINFDALFMNYLQQQAGEGTEEHQDA.

The protein belongs to the SecB family. Homotetramer, a dimer of dimers. One homotetramer interacts with 1 SecA dimer.

The protein resides in the cytoplasm. One of the proteins required for the normal export of preproteins out of the cell cytoplasm. It is a molecular chaperone that binds to a subset of precursor proteins, maintaining them in a translocation-competent state. It also specifically binds to its receptor SecA. In Shigella sonnei (strain Ss046), this protein is Protein-export protein SecB.